The primary structure comprises 605 residues: Cystathionine gamma-synthase-like enzyme iboG1 (605 aa).

Tyr289 lines the substrate pocket. N6-(pyridoxal phosphate)lysine is present on Lys393.

Belongs to the trans-sulfuration enzymes family. It depends on pyridoxal 5'-phosphate as a cofactor.

The protein operates within secondary metabolite biosynthesis. Its function is as follows. Cystathionine gamma-synthase-like enzyme; part of the gene cluster that mediates the biosynthesis of the psychoactive metabolites ibotenic acid and muscimol. The first committed step is glutamate hydroxylation by the 2-oxoglutarate-dependent dioxygenase iboH, and the last step is decarboxylation of ibotenic acid to muscimol by the decarboxylase iboD. The order of the intermediate reactions is somewhat ambiguous. IboA likely activates the carboxylic acid at position 5 to introduce an amide bond, and the flavin monooxygenase iboF generates the N-O bond. There are several options for the latter step. One option is that iboF directly hydroxylates the amide nitrogen formed by iboA to produce a hydroxamic acid species. Another option is that iboF hydroxylates an external N-containing compound, whose resulting N-O bond is subsequently introduced into the hydroxyglutamate scaffold. The paralogous PLP-dependent cystathionine gamma-synthase-like enzymes iboG1 and iboG2 are likely involved in substitution of the OH group at position 3 by the O-N moiety. The first cyclic intermediate is most probably tricholomic acid which is likely desaturated to ibotenic acid by the cytochrome P450 monooxygenase iboC. This chain is Cystathionine gamma-synthase-like enzyme iboG1 (iboG1), found in Amanita muscaria (strain Koide BX008).